A 656-amino-acid chain; its full sequence is Nuclear pore complex protein Nup85 (656 aa).

Position 1 is an N-acetylmethionine (M1). At K92 the chain carries N6-acetyllysine. At S223 the chain carries Phosphoserine.

This sequence belongs to the nucleoporin Nup85 family. As to quaternary structure, component of the nuclear pore complex (NPC). Component of the NPC Nup107-160 subcomplex, consisting of at least NUP107, NUP98/Nup96, NUP160, NUP133, NUP85, NUP37, NUP43 and SEC13. Interacts with NUP160, NUP133 and SEC13. Interacts with NUP37, NUP107 and NUP43. Interacts with CCR2.

It is found in the nucleus. Its subcellular location is the nuclear pore complex. The protein localises to the chromosome. It localises to the centromere. The protein resides in the kinetochore. It is found in the cytoplasm. Its subcellular location is the cytoskeleton. The protein localises to the spindle. It localises to the nucleus membrane. Functionally, essential component of the nuclear pore complex (NPC) that seems to be required for NPC assembly and maintenance. As part of the NPC Nup107-160 subcomplex plays a role in RNA export and in tethering NUP96/Nup98 and NUP153 to the nucleus. The Nup107-160 complex seems to be required for spindle assembly during mitosis. NUP85 is required for membrane clustering of CCL2-activated CCR2. Seems to be involved in CCR2-mediated chemotaxis of monocytes and may link activated CCR2 to the phosphatidyl-inositol 3-kinase-Rac-lammellipodium protrusion cascade. Involved in nephrogenesis. This is Nuclear pore complex protein Nup85 (NUP85) from Homo sapiens (Human).